We begin with the raw amino-acid sequence, 331 residues long: MDIGGPTNIRHVAHVTFDRFDGFLGLPSEFEPDVPRKAPSASATVFGVSTESMQLSYDSRGNCVPVILLLLQSRLYDQGGLQAEGVFRITGENSEEEFVREQLNKGIIPDGIDVHCLAGLIKAWFRELPRGVLDPLPSEQVMQCESDEDFVKVVRLLPQTEASLLNWAINLMADVIQFEHVNKMNSRNLALVFAPNMSQMADPLTALMYAVQVMKLLKSLTEKTVREREASSSVVDRRCSKEAEDGEKEKDNEEEEEDEEEEEEEEDEDEDEEEEGDGVYIIKEEEASEIIKVVADEHKSGSIKSEFEGSSATDSKGDNGVVQPPICSSNP.

One can recognise a CRIB domain in the interval Ile-3–Thr-16. Residues Val-48–Val-225 enclose the Rho-GAP domain. Basic and acidic residues predominate over residues Glu-227–Asp-251. Residues Glu-227 to Pro-331 form a disordered region. A compositionally biased stretch (acidic residues) spans Asn-252–Asp-277.

As to expression, expressed in differentiating xylem cells.

It localises to the cell membrane. Acts as a GTPase activator for the Rac-type GTPase by converting it to an inactive GDP-bound state. The polypeptide is Rho GTPase-activating protein 5 (ROPGAP5) (Arabidopsis thaliana (Mouse-ear cress)).